The primary structure comprises 977 residues: Glycine dehydrogenase (decarboxylating) (977 aa).

Position 702 is an N6-(pyridoxal phosphate)lysine (lysine 702).

The protein belongs to the GcvP family. In terms of assembly, the glycine cleavage system is composed of four proteins: P, T, L and H. Pyridoxal 5'-phosphate is required as a cofactor.

The catalysed reaction is N(6)-[(R)-lipoyl]-L-lysyl-[glycine-cleavage complex H protein] + glycine + H(+) = N(6)-[(R)-S(8)-aminomethyldihydrolipoyl]-L-lysyl-[glycine-cleavage complex H protein] + CO2. Functionally, the glycine cleavage system catalyzes the degradation of glycine. The P protein binds the alpha-amino group of glycine through its pyridoxal phosphate cofactor; CO(2) is released and the remaining methylamine moiety is then transferred to the lipoamide cofactor of the H protein. The chain is Glycine dehydrogenase (decarboxylating) from Xanthomonas axonopodis pv. citri (strain 306).